The sequence spans 498 residues: Trichoplein keratin filament-binding protein (498 aa).

Residues 11-39 (CSQQRLNQQLARQREQEARLRQQWEQNSR) adopt a coiled-coil conformation. Residues Lys50 and Lys57 each participate in a glycyl lysine isopeptide (Lys-Gly) (interchain with G-Cter in ubiquitin) cross-link. Coiled coils occupy residues 66–136 (AYQR…LIAE), 163–353 (VNSW…LREE), and 380–479 (LTGR…EAET). Residues 73–498 (KEEKRRSLEA…PYGHPKIAWN (426 aa)) are interaction with keratin proteins. The tract at residues 167–189 (EMQKEEKKQQEATAEQENKRYEN) is disordered. Basic and acidic residues predominate over residues 168–189 (MQKEEKKQQEATAEQENKRYEN). The trichohyalin/plectin homology domain stretch occupies residues 259-425 (KQMEAFRQKA…RELARREKEE (167 aa)). Positions 447 to 498 (QAWEADQQEEEEEEEARRVEQLSDALLQQEAETMAEQGYRPKPYGHPKIAWN) are disordered.

Belongs to the TCHP family. In terms of assembly, interacts specifically with keratin proteins including, KRT5, KRT6A, KRT8, KRT14, KRT16 and KRT18. Interacts with KCTD17. Post-translationally, ubiquitinated. Ubiquitination by the BCR(KCTD17) E3 ubiquitin ligase complex results in proteasomal degradation, and induces ciliogenesis. In terms of tissue distribution, expressed at high levels in normal urothelial and breast epithelial cells. Also expressed in the smooth muscle and endothelial cells. Reduced expression seen in advanced bladder and breast carcinomas (at protein level). Ubiquitous. Expressed at highest levels in the heart, skeletal muscle, kidney, liver and testis.

It is found in the cytoplasm. Its subcellular location is the cytoskeleton. It localises to the cell membrane. The protein resides in the mitochondrion. The protein localises to the cell junction. It is found in the desmosome. Its subcellular location is the microtubule organizing center. It localises to the centrosome. Tumor suppressor which has the ability to inhibit cell growth and be pro-apoptotic during cell stress. Inhibits cell growth in bladder and prostate cancer cells by a down-regulation of HSPB1 by inhibiting its phosphorylation. May act as a 'capping' or 'branching' protein for keratin filaments in the cell periphery. May regulate K8/K18 filament and desmosome organization mainly at the apical or peripheral regions of simple epithelial cells. Is a negative regulator of ciliogenesis. This is Trichoplein keratin filament-binding protein from Homo sapiens (Human).